Here is a 58-residue protein sequence, read N- to C-terminus: UPF0391 membrane protein Shew185_1413 (58 aa).

A run of 2 helical transmembrane segments spans residues 6 to 26 (LVFLVVAVIAGLFGFTGIAGA) and 28 to 48 (AGIAKIIFFLFIVLLVISLLI).

It belongs to the UPF0391 family.

Its subcellular location is the cell membrane. This chain is UPF0391 membrane protein Shew185_1413, found in Shewanella baltica (strain OS185).